The sequence spans 380 residues: Cytochrome b (380 aa).

4 helical membrane-spanning segments follow: residues 33–53, 77–98, 113–133, and 178–198; these read FGSL…FLAM, WLIR…YLHV, WNIG…GYVL, and FFAF…LHLL. 2 residues coordinate heme b: His83 and His97. Heme b is bound by residues His182 and His196. A ubiquinone is bound at residue His201. The next 4 membrane-spanning stretches (helical) occupy residues 226 to 246, 288 to 308, 320 to 340, and 347 to 367; these read YKDI…ALFS, LGGV…PILH, FSQF…WIGG, and FIII…LLIP.

It belongs to the cytochrome b family. The cytochrome bc1 complex contains 3 respiratory subunits (MT-CYB, CYC1 and UQCRFS1), 2 core proteins (UQCRC1 and UQCRC2) and probably 6 low-molecular weight proteins. Heme b is required as a cofactor.

The protein resides in the mitochondrion inner membrane. In terms of biological role, component of the ubiquinol-cytochrome c reductase complex (complex III or cytochrome b-c1 complex) that is part of the mitochondrial respiratory chain. The b-c1 complex mediates electron transfer from ubiquinol to cytochrome c. Contributes to the generation of a proton gradient across the mitochondrial membrane that is then used for ATP synthesis. The sequence is that of Cytochrome b (mt-cyb) from Arapaima gigas (Arapaima).